Here is a 1151-residue protein sequence, read N- to C-terminus: PPi-type phosphoenolpyruvate carboxykinase 1 (1151 aa).

The stretch at 1083-1129 (RQKLEVAKLNKDLAYLNKTIAEKPRLAETLNKQIAAVKEELQYVSSE) forms a coiled coil.

It belongs to the PPi-type phosphoenolpyruvate carboxykinase family. As to quaternary structure, monomer and trimer; forms heterotrimers with PEPCK2 and PEPCK3.

The protein resides in the cytoplasm. It is found in the cytosol. It carries out the reaction oxaloacetate + diphosphate = phosphoenolpyruvate + phosphate + CO2. In terms of biological role, inorganic pyrophosphate (PPi)-dependent phosphoenolpyruvate carboxykinase, which regulates the carbon flow of the central metabolism by fixing CO(2) to phosphoenolpyruvate to produce oxaloacetate. Can also produce pyruvate and diphosphate from phosphoenolpyruvate and phosphate. This Entamoeba histolytica (strain ATCC 30459 / HM-1:IMSS / ABRM) protein is PPi-type phosphoenolpyruvate carboxykinase 1.